A 252-amino-acid polypeptide reads, in one-letter code: Triosephosphate isomerase (252 aa).

Substrate is bound at residue 9–11 (NWK). The active-site Electrophile is the His95. Glu167 functions as the Proton acceptor in the catalytic mechanism. Substrate contacts are provided by residues Gly173, Ser211, and 232-233 (GG).

It belongs to the triosephosphate isomerase family. As to quaternary structure, homodimer.

The protein localises to the cytoplasm. The catalysed reaction is D-glyceraldehyde 3-phosphate = dihydroxyacetone phosphate. The protein operates within carbohydrate biosynthesis; gluconeogenesis. Its pathway is carbohydrate degradation; glycolysis; D-glyceraldehyde 3-phosphate from glycerone phosphate: step 1/1. Functionally, involved in the gluconeogenesis. Catalyzes stereospecifically the conversion of dihydroxyacetone phosphate (DHAP) to D-glyceraldehyde-3-phosphate (G3P). The polypeptide is Triosephosphate isomerase (Marinobacter nauticus (strain ATCC 700491 / DSM 11845 / VT8) (Marinobacter aquaeolei)).